The primary structure comprises 206 residues: Capsid assembly scaffolding protein (206 aa).

Residues 1 to 13 constitute a propeptide that is removed on maturation; the sequence is MEENKLKFNLQFF. Disordered regions lie at residues 1–50, 83–134, and 173–206; these read MEEN…PEQQ, AAKL…VDSS, and RQSP…IIKN. 2 stretches are compositionally biased toward basic and acidic residues: residues 25–38 and 83–127; these read GDGK…KEND and AAKL…KMLS. Positions 173-192 are enriched in polar residues; the sequence is RQSPLTGGDSFNHSTKNKPQ. The helix-and-hook motif stretch occupies residues 186–206; that stretch reads STKNKPQNLAEIARQKRIIKN.

As to quaternary structure, found in the procapsid with the major capsid protein in a 2:1 capsid protein:scaffold protein molecular ratio. Post-translationally, the N-terminus is cleaved by ribosomal processing protease Prp.

In terms of biological role, scaffolding protein involved in icosahedric procapsid assembly. Coassembles with capsid protein(s) to form the procapsid. The scaffolding protein is found within the capsid as a series of concentric shells. During DNA packaging, the scaffolding protein molecules are released from the procapsid. This chain is Capsid assembly scaffolding protein, found in Staphylococcus phage 80alpha.